The chain runs to 218 residues: Glycerol-3-phosphate acyltransferase (218 aa).

The next 6 membrane-spanning stretches (helical) occupy residues 3–23 (FAIFAFLSFISGSIPFGYWIA), 53–73 (GFPVLVLDVAKGIFPVYLSGI), 82–102 (FQLACGVLAVLGHMFSPFLGF), 112–132 (LGVFLVLTPIACFGAIFVFLV), 142–162 (IGSIFASLTLPLVYAFSSILL), and 166–186 (EVSYWILGTMVFISIGIILTH).

This sequence belongs to the PlsY family. As to quaternary structure, probably interacts with PlsX.

It is found in the cell inner membrane. It catalyses the reaction an acyl phosphate + sn-glycerol 3-phosphate = a 1-acyl-sn-glycero-3-phosphate + phosphate. The protein operates within lipid metabolism; phospholipid metabolism. In terms of biological role, catalyzes the transfer of an acyl group from acyl-phosphate (acyl-PO(4)) to glycerol-3-phosphate (G3P) to form lysophosphatidic acid (LPA). This enzyme utilizes acyl-phosphate as fatty acyl donor, but not acyl-CoA or acyl-ACP. This is Glycerol-3-phosphate acyltransferase from Leptospira borgpetersenii serovar Hardjo-bovis (strain JB197).